We begin with the raw amino-acid sequence, 926 residues long: LPS-assembly protein LptD (926 aa).

The N-terminal stretch at 1 to 22 (MALKSPAFRKKFPLLVTGSLLA) is a signal peptide. A disordered region spans residues 55 to 91 (AAAVDLPPRPVHDTTSVSSNGTVTSQGTSSGEQSAGT). Positions 68–91 (TTSVSSNGTVTSQGTSSGEQSAGT) are enriched in low complexity.

It belongs to the LptD family. As to quaternary structure, component of the lipopolysaccharide transport and assembly complex. Interacts with LptE and LptA.

The protein resides in the cell outer membrane. In terms of biological role, together with LptE, is involved in the assembly of lipopolysaccharide (LPS) at the surface of the outer membrane. The protein is LPS-assembly protein LptD of Pseudomonas syringae pv. syringae (strain B728a).